A 220-amino-acid chain; its full sequence is Deoxyribose-phosphate aldolase 1 (220 aa).

The active-site Proton donor/acceptor is Asp89. Catalysis depends on Lys151, which acts as the Schiff-base intermediate with acetaldehyde. Residue Lys180 is the Proton donor/acceptor of the active site.

The protein belongs to the DeoC/FbaB aldolase family. DeoC type 1 subfamily.

It is found in the cytoplasm. It catalyses the reaction 2-deoxy-D-ribose 5-phosphate = D-glyceraldehyde 3-phosphate + acetaldehyde. It participates in carbohydrate degradation; 2-deoxy-D-ribose 1-phosphate degradation; D-glyceraldehyde 3-phosphate and acetaldehyde from 2-deoxy-alpha-D-ribose 1-phosphate: step 2/2. In terms of biological role, catalyzes a reversible aldol reaction between acetaldehyde and D-glyceraldehyde 3-phosphate to generate 2-deoxy-D-ribose 5-phosphate. This chain is Deoxyribose-phosphate aldolase 1, found in Staphylococcus aureus (strain MSSA476).